The sequence spans 477 residues: MSPKTETKASVGFKAGVKDYKLTYYTPDYETKSTDILAAFRVTPQPGVPPEEAGAAVAAESSTGTWTTVWTDGLTSLDRYKGRCYHIEPVAGEESQFIAYVAYPLDLFEEGSVTNMFTSIVGNVFGFKALRALRLEDLRIPPAYSKTFQGPPHGIQVERDKLNKYGRPLLGCTIKPKLGLSAKNYGRAVYECLRGGLDFTKDDENVNSQPFMRWRDRFLFCAEAIYKSQAETGEIKGHYLNATAGTCEEMIKRAVFARELGVPIVMHDYLTGGFTANTTLAHYCRDNGLLLHIHRAMHAVIDRQKNHGMHFRVLAKALRMSGGDHIHAGTVVGKLEGERDITLGFVDLLRDDFIEKDRSRGIYFTQDWVSMPGVLPVASGGIHVWHMPALTEIFGDDSVLQFGGGTLGQPWGNAPRAVANRVALEACVQARNEGRDLAREGNEIIREASKWSPELAAACEVWKEIKFEFAEWIPCNQ.

Residues 1-2 constitute a propeptide that is removed on maturation; it reads MS. The residue at position 3 (P3) is an N-acetylproline. At K14 the chain carries N6,N6,N6-trimethyllysine. Substrate-binding residues include N123 and T173. Catalysis depends on K175, which acts as the Proton acceptor. K177 provides a ligand contact to substrate. Mg(2+) is bound by residues K201, D203, and E204. An N6-carboxylysine modification is found at K201. H294 acts as the Proton acceptor in catalysis. Substrate contacts are provided by R295, H327, and S379.

Belongs to the RuBisCO large chain family. Type I subfamily. Heterohexadecamer of 8 large chains and 8 small chains; disulfide-linked. The disulfide link is formed within the large subunit homodimers. It depends on Mg(2+) as a cofactor. In terms of processing, the disulfide bond which can form in the large chain dimeric partners within the hexadecamer appears to be associated with oxidative stress and protein turnover.

The protein localises to the plastid. The protein resides in the chloroplast. It catalyses the reaction 2 (2R)-3-phosphoglycerate + 2 H(+) = D-ribulose 1,5-bisphosphate + CO2 + H2O. The enzyme catalyses D-ribulose 1,5-bisphosphate + O2 = 2-phosphoglycolate + (2R)-3-phosphoglycerate + 2 H(+). In terms of biological role, ruBisCO catalyzes two reactions: the carboxylation of D-ribulose 1,5-bisphosphate, the primary event in carbon dioxide fixation, as well as the oxidative fragmentation of the pentose substrate in the photorespiration process. Both reactions occur simultaneously and in competition at the same active site. This chain is Ribulose bisphosphate carboxylase large chain, found in Persea americana (Avocado).